Here is a 331-residue protein sequence, read N- to C-terminus: Protein mono-ADP-ribosyltransferase PARP11 (331 aa).

K11 carries the post-translational modification N6-(ADP-ribosyl)lysine. In terms of domain architecture, WWE spans 15 to 99 (SDVDDMDTSD…VTGKQRLIKR (85 aa)). Residues C49 and C65 each carry the ADP-ribosylcysteine modification. D80 is modified (ADP-ribosyl aspartic acid). Residues 116–331 (IPMPTHWENV…IYPEYLIDFH (216 aa)) enclose the PARP catalytic domain.

It belongs to the ARTD/PARP family. Post-translationally, auto-mono-ADP-ribosylated. As to expression, predominantly expressed in testis, preferentially in postmeiotic germ cells. Also detectable in other tissues, including liver, lung, spleen, thymus and brain.

The protein localises to the nucleus. Its subcellular location is the nuclear pore complex. The enzyme catalyses L-aspartyl-[protein] + NAD(+) = 4-O-(ADP-D-ribosyl)-L-aspartyl-[protein] + nicotinamide. The catalysed reaction is L-cysteinyl-[protein] + NAD(+) = S-(ADP-D-ribosyl)-L-cysteinyl-[protein] + nicotinamide + H(+). It carries out the reaction L-glutamyl-[protein] + NAD(+) = 5-O-(ADP-D-ribosyl)-L-glutamyl-[protein] + nicotinamide. It catalyses the reaction L-lysyl-[protein] + NAD(+) = N(6)-(ADP-D-ribosyl)-L-lysyl-[protein] + nicotinamide + H(+). Its function is as follows. Mono-ADP-ribosyltransferase that mediates mono-ADP-ribosylation of target proteins. Plays a role in nuclear envelope stability and nuclear remodeling during spermiogenesis. Inhibits the type I interferon activated signaling pathway. Mechanistically, mono-ADP-ribosylates beta-TrCP/BTRC to promote IFNAR1 ubiquitination and protect BTRC from ubiquitin-proteasome degradation. This Mus musculus (Mouse) protein is Protein mono-ADP-ribosyltransferase PARP11.